The chain runs to 315 residues: Cross-pathway control WD-repeat protein 2 (315 aa).

WD repeat units lie at residues 14-54 (GHKG…DSYG), 62-101 (GHNHFVSDVVISSDGQFALSSSWDHTLRLWDLNTGATTRR), 104-144 (GHTS…YDIK), 147-188 (CHTE…LKTN), 191-230 (GHTGYINTVSVSPDGSLAASGGKDGITMLWDLNEGKHLYS), 232-270 (EAGDIVNALVFSPNRYWLCAATASCVKIFDLESKSIVDE), and 282-315 (GRQPECVSIAWSADGQTLFAGFTDNQLRVWTVTS).

It belongs to the WD repeat G protein beta family. Ribosomal protein RACK1 subfamily.

Functionally, component of the ribosome, a large ribonucleoprotein complex responsible for the synthesis of proteins in the cell. The small ribosomal subunit (SSU) binds messenger RNAs (mRNAs) and translates the encoded message by selecting cognate aminoacyl-transfer RNA (tRNA) molecules. The large subunit (LSU) contains the ribosomal catalytic site termed the peptidyl transferase center (PTC), which catalyzes the formation of peptide bonds, thereby polymerizing the amino acids delivered by tRNAs into a polypeptide chain. The nascent polypeptides leave the ribosome through a tunnel in the LSU and interact with protein factors that function in enzymatic processing, targeting, and the membrane insertion of nascent chains at the exit of the ribosomal tunnel. Plays in important role in the regulation of vegetative growth and fruiting body development. Especially, positively regulates the expression of genes involved in fruiting body development such as FVFD30 and FVFD16, as well as genes encoding for lectins and hydrophobins. Also regulates the expression of genes involved in cAMP signaling pathway. This chain is Cross-pathway control WD-repeat protein 2, found in Flammulina velutipes (Agaricus velutipes).